The following is a 575-amino-acid chain: Dihydroxy-acid dehydratase (575 aa).

Cys64 is a [2Fe-2S] cluster binding site. Asp96 is a Mg(2+) binding site. [2Fe-2S] cluster is bound at residue Cys137. Residues Asp138 and Lys139 each coordinate Mg(2+). Lys139 bears the N6-carboxylysine mark. Cys214 provides a ligand contact to [2Fe-2S] cluster. Glu465 is a binding site for Mg(2+). The active-site Proton acceptor is Ser491.

The protein belongs to the IlvD/Edd family. Homodimer. [2Fe-2S] cluster is required as a cofactor. It depends on Mg(2+) as a cofactor.

It carries out the reaction (2R)-2,3-dihydroxy-3-methylbutanoate = 3-methyl-2-oxobutanoate + H2O. It catalyses the reaction (2R,3R)-2,3-dihydroxy-3-methylpentanoate = (S)-3-methyl-2-oxopentanoate + H2O. It functions in the pathway amino-acid biosynthesis; L-isoleucine biosynthesis; L-isoleucine from 2-oxobutanoate: step 3/4. Its pathway is amino-acid biosynthesis; L-valine biosynthesis; L-valine from pyruvate: step 3/4. In terms of biological role, functions in the biosynthesis of branched-chain amino acids. Catalyzes the dehydration of (2R,3R)-2,3-dihydroxy-3-methylpentanoate (2,3-dihydroxy-3-methylvalerate) into 2-oxo-3-methylpentanoate (2-oxo-3-methylvalerate) and of (2R)-2,3-dihydroxy-3-methylbutanoate (2,3-dihydroxyisovalerate) into 2-oxo-3-methylbutanoate (2-oxoisovalerate), the penultimate precursor to L-isoleucine and L-valine, respectively. The chain is Dihydroxy-acid dehydratase from Mycobacterium bovis (strain ATCC BAA-935 / AF2122/97).